Here is a 142-residue protein sequence, read N- to C-terminus: Putative transcriptional regulatory protein PF0535 (142 aa).

Belongs to the Tfx family.

Functionally, putative transcriptional regulator. The protein is Putative transcriptional regulatory protein PF0535 of Pyrococcus furiosus (strain ATCC 43587 / DSM 3638 / JCM 8422 / Vc1).